Here is a 195-residue protein sequence, read N- to C-terminus: MSAVDVESRVRHQNFWFVACFAVLVIQIAVEYMMGRVPICACGYVKLWEGGVNTSGNSQHLSDWYTPSHIIHGFLFYGLAHLILRRKPLAAKLLLALVIESGWELLENSPLIIDRYRTATIALDYYGDSILNSAMDTVFMCVGFFFARRAPVALTVAIATFFEIFTGYIIRDNLTLNVVMLIWPVEAIKVWQGGV.

The next 4 helical transmembrane spans lie at 15–35, 64–84, 127–147, and 150–170; these read FWFVACFAVLVIQIAVEYMMG, WYTPSHIIHGFLFYGLAHLIL, GDSILNSAMDTVFMCVGFFFA, and APVALTVAIATFFEIFTGYII.

It belongs to the UPF0314 family.

The protein resides in the cell membrane. The chain is UPF0314 protein RL4541 from Rhizobium johnstonii (strain DSM 114642 / LMG 32736 / 3841) (Rhizobium leguminosarum bv. viciae).